Reading from the N-terminus, the 426-residue chain is MFVDEVEIKVKGGQGGNGVVSFRREKFEPMGGPDGGDGGDGGNVILRVDEGLNTLADFRYQRHYEAERGYHGSGKNKHGRSGEDLVLKVPPGTVVYDADTDELLADLTEDGEEYIVAHGGKGGRGNARFKKSTRKAPRFAEKGEPGEERSIRLELKLVADVGLIGFPNVGKSTLISVVSEARPKIANYHFTTLKPNLGVVALSEYKSFVMADIPGLIEGAHQGVGLGDEFLRHIERTRLLIHIIDISGIEGRDPLEDFKTINRELEKFNEKLSSRPQIVALNKIDLPGARENVERVQPVLEEKGYKVFPISAATKEGVKELIYYTGDLLKELPVERKIAKEDRIVIKPDFADEEENIVVEKKNGIYEVSGRLVEKYVIKTDFNNDAAVKRLLRVLQHHDLNELLRDKGVKNGDTVKIGPMEFEYME.

An Obg domain is found at 1–158 (MFVDEVEIKV…RSIRLELKLV (158 aa)). Residues 159 to 330 (ADVGLIGFPN…LIYYTGDLLK (172 aa)) form the OBG-type G domain. GTP contacts are provided by residues 165 to 172 (GFPNVGKS), 190 to 194 (FTTLK), 212 to 215 (DIPG), 282 to 285 (NKID), and 311 to 313 (SAA). Positions 172 and 192 each coordinate Mg(2+). The OCT domain maps to 349 to 426 (DFADEEENIV…IGPMEFEYME (78 aa)).

This sequence belongs to the TRAFAC class OBG-HflX-like GTPase superfamily. OBG GTPase family. Monomer. Mg(2+) is required as a cofactor.

The protein resides in the cytoplasm. In terms of biological role, an essential GTPase which binds GTP, GDP and possibly (p)ppGpp with moderate affinity, with high nucleotide exchange rates and a fairly low GTP hydrolysis rate. Plays a role in control of the cell cycle, stress response, ribosome biogenesis and in those bacteria that undergo differentiation, in morphogenesis control. The polypeptide is GTPase Obg (Halothermothrix orenii (strain H 168 / OCM 544 / DSM 9562)).